Reading from the N-terminus, the 488-residue chain is Bifunctional protein GlmU (488 aa).

The segment at 1–237 is pyrophosphorylase; sequence MPRTRTPLAA…AEEASGVNDR (237 aa). UDP-N-acetyl-alpha-D-glucosamine-binding positions include 13–16, K27, Q82, 87–88, 110–112, G149, E164, N179, and N235; these read LAAG, GT, and SGD. D112 is a binding site for Mg(2+). Residue N235 participates in Mg(2+) binding. The tract at residues 238-258 is linker; sequence IELARANRVMVGRLAEAFMRA. An N-acetyltransferase region spans residues 259-488; it reads GVTIEDPARF…KGRPAARRAS (230 aa). UDP-N-acetyl-alpha-D-glucosamine contacts are provided by R341 and K359. Catalysis depends on H371, which acts as the Proton acceptor. UDP-N-acetyl-alpha-D-glucosamine-binding residues include Y374 and N385. Acetyl-CoA is bound by residues A388, 394–395, S413, A431, and R448; that span reads NY. The interval 459–488 is disordered; the sequence is AQRQAEKQMKGTATGPAPARKGRPAARRAS. Positions 478-488 are enriched in basic residues; sequence RKGRPAARRAS.

In the N-terminal section; belongs to the N-acetylglucosamine-1-phosphate uridyltransferase family. The protein in the C-terminal section; belongs to the transferase hexapeptide repeat family. In terms of assembly, homotrimer. The cofactor is Mg(2+).

It is found in the cytoplasm. It carries out the reaction alpha-D-glucosamine 1-phosphate + acetyl-CoA = N-acetyl-alpha-D-glucosamine 1-phosphate + CoA + H(+). It catalyses the reaction N-acetyl-alpha-D-glucosamine 1-phosphate + UTP + H(+) = UDP-N-acetyl-alpha-D-glucosamine + diphosphate. Its pathway is nucleotide-sugar biosynthesis; UDP-N-acetyl-alpha-D-glucosamine biosynthesis; N-acetyl-alpha-D-glucosamine 1-phosphate from alpha-D-glucosamine 6-phosphate (route II): step 2/2. It functions in the pathway nucleotide-sugar biosynthesis; UDP-N-acetyl-alpha-D-glucosamine biosynthesis; UDP-N-acetyl-alpha-D-glucosamine from N-acetyl-alpha-D-glucosamine 1-phosphate: step 1/1. It participates in bacterial outer membrane biogenesis; LPS lipid A biosynthesis. Functionally, catalyzes the last two sequential reactions in the de novo biosynthetic pathway for UDP-N-acetylglucosamine (UDP-GlcNAc). The C-terminal domain catalyzes the transfer of acetyl group from acetyl coenzyme A to glucosamine-1-phosphate (GlcN-1-P) to produce N-acetylglucosamine-1-phosphate (GlcNAc-1-P), which is converted into UDP-GlcNAc by the transfer of uridine 5-monophosphate (from uridine 5-triphosphate), a reaction catalyzed by the N-terminal domain. This Anaeromyxobacter dehalogenans (strain 2CP-C) protein is Bifunctional protein GlmU.